The chain runs to 354 residues: Selection and upkeep of intraepithelial T-cells protein 1 (354 aa).

The Ig-like V-type 1 domain occupies 23–141 (PSSEQFTVNS…EEAIAEVKVT (119 aa)). Intrachain disulfides connect Cys49-Cys123 and Cys163-Cys217. An Ig-like C1-type 2 domain is found at 161–233 (VECNSEGWFP…TGQEERTSIV (73 aa)). A run of 3 helical transmembrane segments spans residues 243-263 (SVWILILVAILAVLLFFIMMP), 283-303 (LIGIGIVFSSMCVIIGLTITL), and 326-346 (MTVMVWVLMVFITMLISLVYF).

This sequence belongs to the SKINT family. In terms of tissue distribution, expressed in the thymus and skin.

It is found in the membrane. In terms of biological role, may act by engaging a cell surface molecule on immature T-cells in the embryonic thymus. The protein is Selection and upkeep of intraepithelial T-cells protein 1 (SKINT1) of Macaca fascicularis (Crab-eating macaque).